The following is a 118-amino-acid chain: Large ribosomal subunit protein bL20 (118 aa).

It belongs to the bacterial ribosomal protein bL20 family.

Binds directly to 23S ribosomal RNA and is necessary for the in vitro assembly process of the 50S ribosomal subunit. It is not involved in the protein synthesizing functions of that subunit. The chain is Large ribosomal subunit protein bL20 from Thermotoga neapolitana (strain ATCC 49049 / DSM 4359 / NBRC 107923 / NS-E).